The following is a 272-amino-acid chain: Phosphate import ATP-binding protein PstB (272 aa).

The 242-residue stretch at 26–267 (LEIRNLDLSY…PRKRKTEDYI (242 aa)) folds into the ABC transporter domain. 58-65 (GPSGCGKS) is an ATP binding site.

Belongs to the ABC transporter superfamily. Phosphate importer (TC 3.A.1.7) family. In terms of assembly, the complex is composed of two ATP-binding proteins (PstB), two transmembrane proteins (PstC and PstA) and a solute-binding protein (PstS).

The protein localises to the cell inner membrane. It catalyses the reaction phosphate(out) + ATP + H2O = ADP + 2 phosphate(in) + H(+). Functionally, part of the ABC transporter complex PstSACB involved in phosphate import. Responsible for energy coupling to the transport system. The protein is Phosphate import ATP-binding protein PstB of Shewanella denitrificans (strain OS217 / ATCC BAA-1090 / DSM 15013).